A 249-amino-acid chain; its full sequence is FMN reductase (NADPH) (249 aa).

It belongs to the flavin oxidoreductase frp family. Homodimer.

It carries out the reaction FMNH2 + NADP(+) = FMN + NADPH + 2 H(+). Functionally, reduces FMNH(2) to FMN, with NADPH as reductant. It also reduces nitroaromatic compounds, quinones and azo dyes. This chain is FMN reductase (NADPH) (nfrA1), found in Bacillus subtilis (strain 168).